Here is a 286-residue protein sequence, read N- to C-terminus: Main hemagglutinin component type C (286 aa).

A 1-alpha repeat occupies 2–55 (SQTNANDLRNNEVFFISPSNNTNKVLDKISQSEVKLWNKLSGANQKWRLIYDTN). Ricin B-type lectin domains lie at 12–140 (NEVF…FKFS) and 180–284 (DSSR…WIIN). Residues 56 to 100 (KQAYKIKVMDNTSLILTWNAPLSSVSVKTDTNGDNQYWYLLQNYI) form a 1-beta repeat. The stretch at 101–148 (SRNVIIRNYMNPNLVLQYNIDDTLMVSTQTSSSNQFFKFSNCIYEALN) is one 1-gamma repeat. One copy of the 2-alpha repeat lies at 149–193 (NRNCKLQTQLNSDRFLSKNLNSQIIVLWQWFDSSRQKWIIEYNET). The tract at residues 167–183 (NLNSQIIVLWQWFDSSR) is sugar-binding site 1. One copy of the 2-beta repeat lies at 194–239 (KSAYTLKCQENNRYLTWIQNSNNYVETYQSTDSLIQYWNINYLDND). A 2-gamma repeat occupies 240-286 (ASKYILYNLQDTNRVLDVYNSQIANGTHVIVDSYHGNTNQQWIINLI). The segment at 256–279 (DVYNSQIANGTHVIVDSYHGNTNQ) is sugar-binding site 2.

In terms of assembly, botulinum toxins are produced as progenitor toxins of large molecular sizes of 12S (M toxin) and 16S (L toxin). M toxin consists of a non-toxic, non-hemagglutinin component (NTNHA) and the neurotoxin. L toxin consists of the M toxin and the 3 subcomponents of hemagglutinin (HA). HA is composed of subcomponents of 70, 33, and 17 kDa. The 70 kDa subcomponent undergoes proteolytic processing and is split into HA-55 (also called HA-53 and HA3b) and HA-22-23 (also called HA3a). The stoichiometry of the whole complex has been modeled as one BoNT/C, one NTNHA, three HA-70, six HA-33 and three HA-17.

It is found in the secreted. In terms of biological role, agglutinates human erythrocytes. The hemagglutinin (HA) component of the progenitor toxin protects the structural integrity of botulinum neurotoxin; may increase internalization of the neurotoxin into the bloodstream of the host. The hemagglutinin (HA) component is involved in binding to the upper small intestine through interactions with glycolipids and glycoproteins containing sialic acid moieties. Binds galactose or oligosaccharides with galactose at their non-reducing end. Binds eukaryotic host mucins; binding is inhibited by N-acetyl-beta-neuraminic acid, N-acetyl-D-galactosamine, galactose, and methyl N-acetyl-beta-neuraminic acid. Binds N-acetyl-beta-neuraminic acid, N-acetyl-D-galactosamine and galactose (but not glucose) via 2 sites. This chain is Main hemagglutinin component type C, found in Clostridium botulinum C (Clostridium botulinum C bacteriophage).